A 797-amino-acid chain; its full sequence is Xaa-Pro dipeptidyl-peptidase (797 aa).

Active-site charge relay system residues include Ser-370, Asp-490, and His-521.

Belongs to the peptidase S15 family. Homodimer.

The protein localises to the cytoplasm. It catalyses the reaction Hydrolyzes Xaa-Pro-|- bonds to release unblocked, N-terminal dipeptides from substrates including Ala-Pro-|-p-nitroanilide and (sequentially) Tyr-Pro-|-Phe-Pro-|-Gly-Pro-|-Ile.. Its function is as follows. Removes N-terminal dipeptides sequentially from polypeptides having unsubstituted N-termini provided that the penultimate residue is proline. This chain is Xaa-Pro dipeptidyl-peptidase, found in Lacticaseibacillus casei (strain BL23) (Lactobacillus casei).